Here is a 199-residue protein sequence, read N- to C-terminus: Putative acetyltransferase SAR2635 (199 aa).

The protein belongs to the transferase hexapeptide repeat family.

The polypeptide is Putative acetyltransferase SAR2635 (Staphylococcus aureus (strain MRSA252)).